A 61-amino-acid chain; its full sequence is Small ribosomal subunit protein uS14B (61 aa).

Zn(2+) is bound by residues Cys24, Cys27, Cys40, and Cys43.

This sequence belongs to the universal ribosomal protein uS14 family. Zinc-binding uS14 subfamily. Part of the 30S ribosomal subunit. Contacts proteins S3 and S10. Zn(2+) is required as a cofactor.

Binds 16S rRNA, required for the assembly of 30S particles and may also be responsible for determining the conformation of the 16S rRNA at the A site. In Lactiplantibacillus plantarum (strain ATCC BAA-793 / NCIMB 8826 / WCFS1) (Lactobacillus plantarum), this protein is Small ribosomal subunit protein uS14B.